We begin with the raw amino-acid sequence, 119 residues long: Large ribosomal subunit protein uL22 (119 aa).

The protein belongs to the universal ribosomal protein uL22 family. Part of the 50S ribosomal subunit.

Its function is as follows. This protein binds specifically to 23S rRNA; its binding is stimulated by other ribosomal proteins, e.g. L4, L17, and L20. It is important during the early stages of 50S assembly. It makes multiple contacts with different domains of the 23S rRNA in the assembled 50S subunit and ribosome. In terms of biological role, the globular domain of the protein is located near the polypeptide exit tunnel on the outside of the subunit, while an extended beta-hairpin is found that lines the wall of the exit tunnel in the center of the 70S ribosome. The polypeptide is Large ribosomal subunit protein uL22 (Rickettsia typhi (strain ATCC VR-144 / Wilmington)).